A 282-amino-acid chain; its full sequence is Pseudokinase OPG198 (282 aa).

M1 and K30 together coordinate ATP. In terms of domain architecture, Protein kinase spans 1–282 (MESFKYCFDN…DRLRRLFIQD (282 aa)).

The protein belongs to the protein kinase superfamily. Ser/Thr protein kinase family. Poxviruses subfamily. As to quaternary structure, interacts with B1/VPK1. Interacts with host VRK1. Interacts with host VRK2.

It localises to the host nucleus. Both catalytically active kinases B1/VPK1 and host VRK2 repress B12 inhibitory activity in a B1/VPK1 deletion mutant strain. Functionally, pseudokinase that plays a role in viral DNA replication repression by activating the antiviral protein BANF1 and inhibiting the activity of host VRK1, a cellular modulator of BANF1. The protein is Pseudokinase OPG198 (OPG198) of Cynomys gunnisoni (Gunnison's prairie dog).